A 127-amino-acid chain; its full sequence is Small ribosomal subunit protein uS13 (127 aa).

The segment at 99–127 (RGQRTRTNARTRRGRRGQAIGIKKKTLKK) is disordered.

Belongs to the universal ribosomal protein uS13 family. In terms of assembly, part of the 30S ribosomal subunit. Forms a loose heterodimer with protein S19. Forms two bridges to the 50S subunit in the 70S ribosome.

Functionally, located at the top of the head of the 30S subunit, it contacts several helices of the 16S rRNA. In the 70S ribosome it contacts the 23S rRNA (bridge B1a) and protein L5 of the 50S subunit (bridge B1b), connecting the 2 subunits; these bridges are implicated in subunit movement. Contacts the tRNAs in the A and P-sites. The chain is Small ribosomal subunit protein uS13 from Roseiflexus castenholzii (strain DSM 13941 / HLO8).